Here is a 160-residue protein sequence, read N- to C-terminus: Nucleotide-binding protein VF_1240 (160 aa).

Belongs to the YajQ family.

Nucleotide-binding protein. The sequence is that of Nucleotide-binding protein VF_1240 from Aliivibrio fischeri (strain ATCC 700601 / ES114) (Vibrio fischeri).